A 118-amino-acid polypeptide reads, in one-letter code: Aspartate 1-decarboxylase 1 (118 aa).

Catalysis depends on Ser25, which acts as the Schiff-base intermediate with substrate; via pyruvic acid. Ser25 is subject to Pyruvic acid (Ser). Thr57 is a binding site for substrate. The active-site Proton donor is the Tyr58. 73-75 (GAA) provides a ligand contact to substrate.

This sequence belongs to the PanD family. As to quaternary structure, heterooctamer of four alpha and four beta subunits. Requires pyruvate as cofactor. In terms of processing, is synthesized initially as an inactive proenzyme, which is activated by self-cleavage at a specific serine bond to produce a beta-subunit with a hydroxyl group at its C-terminus and an alpha-subunit with a pyruvoyl group at its N-terminus.

Its subcellular location is the cytoplasm. The enzyme catalyses L-aspartate + H(+) = beta-alanine + CO2. Its pathway is cofactor biosynthesis; (R)-pantothenate biosynthesis; beta-alanine from L-aspartate: step 1/1. In terms of biological role, catalyzes the pyruvoyl-dependent decarboxylation of aspartate to produce beta-alanine. The chain is Aspartate 1-decarboxylase 1 from Gloeobacter violaceus (strain ATCC 29082 / PCC 7421).